The following is a 304-amino-acid chain: Large ribosomal subunit protein uL18 (304 aa).

It belongs to the universal ribosomal protein uL18 family. In terms of assembly, component of a hexameric 5S RNP precursor complex, composed of 5S RNA, RRS1, RPF2, RPL5, RPL11 and SYO1; this complex acts as a precursor for ribosome assembly.

It is found in the cytoplasm. Its function is as follows. Component of the ribosome, a large ribonucleoprotein complex responsible for the synthesis of proteins in the cell. The small ribosomal subunit (SSU) binds messenger RNAs (mRNAs) and translates the encoded message by selecting cognate aminoacyl-transfer RNA (tRNA) molecules. The large subunit (LSU) contains the ribosomal catalytic site termed the peptidyl transferase center (PTC), which catalyzes the formation of peptide bonds, thereby polymerizing the amino acids delivered by tRNAs into a polypeptide chain. The nascent polypeptides leave the ribosome through a tunnel in the LSU and interact with protein factors that function in enzymatic processing, targeting, and the membrane insertion of nascent chains at the exit of the ribosomal tunnel. This is Large ribosomal subunit protein uL18 from Chaetomium thermophilum (strain DSM 1495 / CBS 144.50 / IMI 039719) (Thermochaetoides thermophila).